An 88-amino-acid polypeptide reads, in one-letter code: Sapecin-B (88 aa).

The N-terminal stretch at 1 to 24 (MKFLTSLLLLFVVVMVSAVNLSMA) is a signal peptide. Positions 25–54 (KESANQLTERLQELDGAAIQEPAELNRHKR) are excised as a propeptide. 3 disulfide bridges follow: cysteine 57–cysteine 78, cysteine 64–cysteine 84, and cysteine 68–cysteine 86.

This sequence belongs to the invertebrate defensin family. Type 1 subfamily. As to expression, hemocytes and fat body.

The protein resides in the secreted. In terms of biological role, sapecins, which are potent bactericidal proteins, are produced in response to injury. Sapecin B is cytotoxic to Gram-positive bacteria. The polypeptide is Sapecin-B (Sarcophaga peregrina (Flesh fly)).